The chain runs to 115 residues: Translation initiation factor 1A 2 (115 aa).

Residues 1-34 (MANYRSTIRHRNSGSRKSVSGDTHEVTRVRTPQK) are disordered. Basic and acidic residues predominate over residues 22-34 (DTHEVTRVRTPQK). The 75-residue stretch at 27–101 (TRVRTPQKDR…SKADVTWKYT (75 aa)) folds into the S1-like domain.

This sequence belongs to the eIF-1A family.

In terms of biological role, seems to be required for maximal rate of protein biosynthesis. Enhances ribosome dissociation into subunits and stabilizes the binding of the initiator Met-tRNA(I) to 40 S ribosomal subunits. The sequence is that of Translation initiation factor 1A 2 from Methanosarcina barkeri (strain Fusaro / DSM 804).